The following is a 423-amino-acid chain: DUF21 domain-containing protein At2g14520 (423 aa).

Residues 1-11 (MAVEYECCGTS) are Extracellular-facing. The CNNM transmembrane domain occupies 8–191 (CGTSFFIHIA…GKGGELTHDE (184 aa)). The chain crosses the membrane as a helical span at residues 12 to 32 (FFIHIAVIVLLVLFAGLMSGL). Residues 33–70 (TLGLMSMSLVDLEVLAKSGTPRDRIHAAKILPVVKNQH) lie on the Cytoplasmic side of the membrane. A helical membrane pass occupies residues 71–91 (LLLCTLLICNAAAMEALPIFL). The Extracellular segment spans residues 92 to 94 (DAL). The chain crosses the membrane as a helical span at residues 95 to 115 (VTAWGAILISVTLILLFGEII). The Cytoplasmic segment spans residues 116–136 (PQSVCSRHGLAIGATVAPFVR). The chain crosses the membrane as a helical span at residues 137-157 (VLVWICLPVAWPISKLLDFLL). Over 158-423 (GHGRVALFRR…DETDHHFEDL (266 aa)) the chain is Extracellular. Residues 210–271 (MTPISDTFVI…TINPDEEIQV (62 aa)) form the CBS 1 domain. Asparagine 273 and asparagine 322 each carry an N-linked (GlcNAc...) asparagine glycan. 2 consecutive CBS domains span residues 275–332 (TIRR…RVDV) and 356–415 (PNRA…IFDE).

Its subcellular location is the membrane. The polypeptide is DUF21 domain-containing protein At2g14520 (CBSDUF3) (Arabidopsis thaliana (Mouse-ear cress)).